A 279-amino-acid polypeptide reads, in one-letter code: Pantothenate synthetase (279 aa).

Met-31–His-38 contributes to the ATP binding site. The Proton donor role is filled by His-38. (R)-pantoate is bound at residue Gln-62. Residue Gln-62 coordinates beta-alanine. Position 148 to 151 (Gly-148 to Asp-151) interacts with ATP. Residue Gln-154 coordinates (R)-pantoate. Residues Val-177 and Leu-185–Arg-188 contribute to the ATP site.

Belongs to the pantothenate synthetase family. In terms of assembly, homodimer.

The protein localises to the cytoplasm. It carries out the reaction (R)-pantoate + beta-alanine + ATP = (R)-pantothenate + AMP + diphosphate + H(+). It participates in cofactor biosynthesis; (R)-pantothenate biosynthesis; (R)-pantothenate from (R)-pantoate and beta-alanine: step 1/1. In terms of biological role, catalyzes the condensation of pantoate with beta-alanine in an ATP-dependent reaction via a pantoyl-adenylate intermediate. The sequence is that of Pantothenate synthetase from Cereibacter sphaeroides (strain ATCC 17029 / ATH 2.4.9) (Rhodobacter sphaeroides).